The sequence spans 150 residues: Large ribosomal subunit protein bL9 (150 aa).

It belongs to the bacterial ribosomal protein bL9 family.

Binds to the 23S rRNA. This Janthinobacterium sp. (strain Marseille) (Minibacterium massiliensis) protein is Large ribosomal subunit protein bL9.